The primary structure comprises 686 residues: Delta-like protein 4 (686 aa).

The signal sequence occupies residues 1–27 (MTPGSRSACRWALLLLAVLWPQQRAAG). The Extracellular segment spans residues 28–530 (SGIFQLRLQE…PVGLPPSFPW (503 aa)). Cystine bridges form between cysteine 51–cysteine 55 and cysteine 62–cysteine 75. Residues asparagine 79, asparagine 109, and asparagine 162 are each glycosylated (N-linked (GlcNAc...) asparagine). The 45-residue stretch at 174-218 (VVCSDNYYGDSCSRLCKKRDDHFGHYECQPDGSLSCLPGWTGKYC) folds into the DSL domain. A disulfide bridge links cysteine 176 with cysteine 185. 2 interaction with Notch1 regions span residues 186-188 (SRL) and 192-196 (RDDHF). 26 disulfide bridges follow: cysteine 189/cysteine 201, cysteine 209/cysteine 218, cysteine 223/cysteine 234, cysteine 227/cysteine 240, cysteine 242/cysteine 251, cysteine 254/cysteine 265, cysteine 260/cysteine 271, cysteine 273/cysteine 282, cysteine 289/cysteine 301, cysteine 295/cysteine 311, cysteine 313/cysteine 322, cysteine 329/cysteine 340, cysteine 334/cysteine 349, cysteine 351/cysteine 360, cysteine 367/cysteine 378, cysteine 372/cysteine 389, cysteine 391/cysteine 400, cysteine 407/cysteine 418, cysteine 412/cysteine 427, cysteine 429/cysteine 438, cysteine 445/cysteine 456, cysteine 450/cysteine 465, cysteine 467/cysteine 476, cysteine 485/cysteine 496, cysteine 490/cysteine 507, and cysteine 509/cysteine 518. EGF-like domains follow at residues 219-252 (DQPICLSGCHEQNGYCSKPDECNCRPGWQGPLCN), 256-283 (PHNGCRHGTCTIPWQCACDEGWGGLFCD), 285-323 (DLNYCTHHSPCKNGSTCSNSGPRGYTCTCLPGYTGEHCE), 325-361 (ELSKCASNPCRNGGSCKDHENSYHCLCPPGYYGQHCE), 363-401 (STLTCADSPCFNGGSCRERNQGASYACECPPNFTGSNCE), 403-439 (KVDRCTSNPCANGGQCLNRGPSRTCRCRPGFTGTHCE), 441-477 (HISDCARSPCAHGGTCHDLENGPVCTCPAGFSGRRCE), and 481-519 (TNDACASGPCFNGATCYTGLSPNNFVCNCPYGFVGSRCE). The helical transmembrane segment at 531–551 (VAVSLGVGLVVLLVLLVMVAV) threads the bilayer. The Cytoplasmic portion of the chain corresponds to 552 to 686 (AVRQLRLRRP…RNECVIATEV (135 aa)).

As to quaternary structure, interacts with NOTCH4. Interacts (via N-terminal DSL and MNNL domains) with NOTCH1 (via EGF-like domains).

It localises to the cell membrane. In terms of biological role, involved in the Notch signaling pathway as Notch ligand. Activates NOTCH1 and NOTCH4. Involved in angiogenesis; negatively regulates endothelial cell proliferation and migration and angiogenic sprouting. Essential for retinal progenitor proliferation. Required for suppressing rod fates in late retinal progenitors as well as for proper generation of other retinal cell types. During spinal cord neurogenesis, inhibits V2a interneuron fate. This chain is Delta-like protein 4, found in Rattus norvegicus (Rat).